The chain runs to 609 residues: Ataxin-10 homolog (609 aa).

Disordered regions lie at residues 265–293 (KSTT…TTTG), 405–426 (KQQE…SKDS), and 461–490 (SDTN…KGFN). Residues 266-292 (STTESTTESTTTESTDSTTDSTTTTTT) are compositionally biased toward low complexity. Positions 466 to 479 (SSSSSSSSSSSTTT) are enriched in low complexity. Residues 480–490 (DGETVTSKGFN) are compositionally biased toward polar residues.

Belongs to the ATXN10 family.

Functionally, may play a role in the regulation of cytokinesis. The sequence is that of Ataxin-10 homolog (atxn10) from Dictyostelium discoideum (Social amoeba).